We begin with the raw amino-acid sequence, 220 residues long: uncharacterized protein (220 aa).

This is an uncharacterized protein from Archaeoglobus fulgidus (strain ATCC 49558 / DSM 4304 / JCM 9628 / NBRC 100126 / VC-16).